A 111-amino-acid polypeptide reads, in one-letter code: Probable 4-amino-4-deoxy-L-arabinose-phosphoundecaprenol flippase subunit ArnE (111 aa).

The next 3 helical transmembrane spans lie at 38–58 (LWLG…LLVL), 61–81 (LPVG…TLAA), and 91–111 (PRHW…GSAA). The 70-residue stretch at 40-109 (LGLALICMGA…IISGIIILGS (70 aa)) folds into the EamA domain.

It belongs to the ArnE family. As to quaternary structure, heterodimer of ArnE and ArnF.

It is found in the cell inner membrane. It functions in the pathway bacterial outer membrane biogenesis; lipopolysaccharide biosynthesis. Translocates 4-amino-4-deoxy-L-arabinose-phosphoundecaprenol (alpha-L-Ara4N-phosphoundecaprenol) from the cytoplasmic to the periplasmic side of the inner membrane. This Salmonella enteritidis PT4 (strain P125109) protein is Probable 4-amino-4-deoxy-L-arabinose-phosphoundecaprenol flippase subunit ArnE.